The sequence spans 140 residues: Nucleoside diphosphate kinase (140 aa).

6 residues coordinate ATP: lysine 11, phenylalanine 59, arginine 87, threonine 93, arginine 104, and asparagine 114. Histidine 117 functions as the Pros-phosphohistidine intermediate in the catalytic mechanism.

The protein belongs to the NDK family. Homotetramer. The cofactor is Mg(2+).

The protein resides in the cytoplasm. It carries out the reaction a 2'-deoxyribonucleoside 5'-diphosphate + ATP = a 2'-deoxyribonucleoside 5'-triphosphate + ADP. It catalyses the reaction a ribonucleoside 5'-diphosphate + ATP = a ribonucleoside 5'-triphosphate + ADP. Major role in the synthesis of nucleoside triphosphates other than ATP. The ATP gamma phosphate is transferred to the NDP beta phosphate via a ping-pong mechanism, using a phosphorylated active-site intermediate. The chain is Nucleoside diphosphate kinase from Ruegeria pomeroyi (strain ATCC 700808 / DSM 15171 / DSS-3) (Silicibacter pomeroyi).